The primary structure comprises 213 residues: FMN-dependent NADH:quinone oxidoreductase (213 aa).

Serine 17–serine 19 contributes to the FMN binding site.

This sequence belongs to the azoreductase type 1 family. In terms of assembly, homodimer. FMN serves as cofactor.

It carries out the reaction 2 a quinone + NADH + H(+) = 2 a 1,4-benzosemiquinone + NAD(+). The catalysed reaction is N,N-dimethyl-1,4-phenylenediamine + anthranilate + 2 NAD(+) = 2-(4-dimethylaminophenyl)diazenylbenzoate + 2 NADH + 2 H(+). Functionally, quinone reductase that provides resistance to thiol-specific stress caused by electrophilic quinones. Its function is as follows. Also exhibits azoreductase activity. Catalyzes the reductive cleavage of the azo bond in aromatic azo compounds to the corresponding amines. This is FMN-dependent NADH:quinone oxidoreductase from Ruminiclostridium cellulolyticum (strain ATCC 35319 / DSM 5812 / JCM 6584 / H10) (Clostridium cellulolyticum).